The primary structure comprises 150 residues: D-aminoacyl-tRNA deacylase (150 aa).

The Gly-cisPro motif, important for rejection of L-amino acids motif lies at 138–139 (GP).

Belongs to the DTD family. In terms of assembly, homodimer.

It localises to the cytoplasm. The catalysed reaction is glycyl-tRNA(Ala) + H2O = tRNA(Ala) + glycine + H(+). It carries out the reaction a D-aminoacyl-tRNA + H2O = a tRNA + a D-alpha-amino acid + H(+). In terms of biological role, an aminoacyl-tRNA editing enzyme that deacylates mischarged D-aminoacyl-tRNAs. Also deacylates mischarged glycyl-tRNA(Ala), protecting cells against glycine mischarging by AlaRS. Acts via tRNA-based rather than protein-based catalysis; rejects L-amino acids rather than detecting D-amino acids in the active site. By recycling D-aminoacyl-tRNA to D-amino acids and free tRNA molecules, this enzyme counteracts the toxicity associated with the formation of D-aminoacyl-tRNA entities in vivo and helps enforce protein L-homochirality. In Salinibacter ruber (strain DSM 13855 / M31), this protein is D-aminoacyl-tRNA deacylase.